The chain runs to 1218 residues: Thrombospondin type 1 domain-containing protein (1218 aa).

Disordered stretches follow at residues 82-101 (SAGFPRSASSSASSAPPCSS), 189-240 (SLEE…SRTR), 298-383 (HTAN…VNGL), and 445-471 (GGKSRRSEWRRKRTGMMASEARESHRG). Basic and acidic residues predominate over residues 201–210 (GYEEERERRS). The segment covering 315–375 (SSRFTSKASS…SSPLSSSPDS (61 aa)) has biased composition (low complexity). Residues 638-704 (SCITGPWSEW…RRKCNLGACP (67 aa)) form the TSP type-1 domain. The chain crosses the membrane as a helical span at residues 886–906 (GVSHLWISLCAGAVAAVVFLV). Residues 1129–1153 (RRRARRGRREGDSGEGGDCGEARKA) are disordered.

In terms of assembly, component of a complex, at least composed of cysteine repeat modular protein A (CRMPa), cysteine repeat modular protein B (CRMPb), micronemal protein 15 (MIC15) and thrombospondin type 1 domain-containing protein (TSP1).

The protein resides in the membrane. Its function is as follows. Required for rhoptry secretion. Plays a role in host cell invasion. The protein is Thrombospondin type 1 domain-containing protein of Toxoplasma gondii.